A 233-amino-acid chain; its full sequence is Large ribosomal subunit protein uL1 (233 aa).

This sequence belongs to the universal ribosomal protein uL1 family. In terms of assembly, part of the 50S ribosomal subunit.

In terms of biological role, binds directly to 23S rRNA. The L1 stalk is quite mobile in the ribosome, and is involved in E site tRNA release. Protein L1 is also a translational repressor protein, it controls the translation of the L11 operon by binding to its mRNA. This is Large ribosomal subunit protein uL1 from Brucella anthropi (strain ATCC 49188 / DSM 6882 / CCUG 24695 / JCM 21032 / LMG 3331 / NBRC 15819 / NCTC 12168 / Alc 37) (Ochrobactrum anthropi).